Consider the following 318-residue polypeptide: MEITFLGTSSGVPTRSRNVSSIALRLPQRAEIWLFDCGEGTQHQLLRSDLKSSQIRRIFITHMHGDHIFGLMGLLASIGLAGSAQDIDIYGPPGLGDYLRACAKYSYTNLANRVRVHAISPGILYEDEEFTVSCQLLKHRIPAHGYRIAEKDRPGRFDVEKANALGIPPGPIYGKLKKGETVTLPDGSKIRGQSLCGETEIGRKIAYCTDTIFCEGSIELAQNADVLIHEATFAHQDAGLAFESVHSTSTMAAQVALAAQVKLLLMTHFSPRYLPGNSLDISNLLEEARAIFPNTKLAYDFLTYEVPRNRQEMALGVK.

7 residues coordinate Zn(2+): His62, His64, Asp66, His67, His139, Asp210, and His268. Asp66 acts as the Proton acceptor in catalysis.

The protein belongs to the RNase Z family. As to quaternary structure, homodimer. Zn(2+) is required as a cofactor.

It catalyses the reaction Endonucleolytic cleavage of RNA, removing extra 3' nucleotides from tRNA precursor, generating 3' termini of tRNAs. A 3'-hydroxy group is left at the tRNA terminus and a 5'-phosphoryl group is left at the trailer molecule.. Its function is as follows. Zinc phosphodiesterase, which displays some tRNA 3'-processing endonuclease activity. Probably involved in tRNA maturation, by removing a 3'-trailer from precursor tRNA. This Microcystis aeruginosa (strain NIES-843 / IAM M-2473) protein is Ribonuclease Z.